The primary structure comprises 241 residues: Trypsin-1 (241 aa).

A signal peptide spans 1–13 (MKSLIFVLLLGAV). The propeptide at 14–19 (FAEEDK) is activation peptide. Positions 20-239 (IVGGYECTKH…LSGWVRDTMA (220 aa)) constitute a Peptidase S1 domain. 6 disulfide bridges follow: C26–C155, C44–C60, C128–C228, C135–C201, C166–C180, and C191–C215. Active-site charge relay system residues include H59 and D103. The Charge relay system role is filled by S195.

The protein belongs to the peptidase S1 family.

The protein localises to the secreted. Its subcellular location is the extracellular space. It catalyses the reaction Preferential cleavage: Arg-|-Xaa, Lys-|-Xaa.. This is Trypsin-1 from Gadus morhua (Atlantic cod).